A 122-amino-acid polypeptide reads, in one-letter code: Ribosome-binding factor A (122 aa).

Residues 95–111 show a composition bias toward basic and acidic residues; that stretch reads PTVERVTRIQRTLREVS. Residues 95–122 form a disordered region; the sequence is PTVERVTRIQRTLREVSGEDGDGNGTQE.

The protein belongs to the RbfA family. In terms of assembly, monomer. Binds 30S ribosomal subunits, but not 50S ribosomal subunits or 70S ribosomes.

It is found in the cytoplasm. Its function is as follows. One of several proteins that assist in the late maturation steps of the functional core of the 30S ribosomal subunit. Associates with free 30S ribosomal subunits (but not with 30S subunits that are part of 70S ribosomes or polysomes). Required for efficient processing of 16S rRNA. May interact with the 5'-terminal helix region of 16S rRNA. This chain is Ribosome-binding factor A, found in Rubrobacter xylanophilus (strain DSM 9941 / JCM 11954 / NBRC 16129 / PRD-1).